Here is a 904-residue protein sequence, read N- to C-terminus: Disks large homolog 1 (904 aa).

Residues 4 to 64 form the L27 domain; the sequence is RKQDTQRALH…FYEVTLLDNP (61 aa). Threonine 115 bears the Phosphothreonine mark. Serine 122, serine 138, and serine 158 each carry phosphoserine. The interaction with SH3 domains stretch occupies residues 162–212; it reads PTEAVLPSPPTVPVIPVLPVPAENTVILPTIPQANPPPVLVNTDSLETPTY. PDZ domains are found at residues 224 to 310, 319 to 405, and 466 to 546; these read EITL…VKRR, EIKL…VAKP, and KVVL…AQYR. Residues 224–546 are required for interaction with MARCHF2; that stretch reads EITLERGNSG…QAVTIVAQYR (323 aa). Residue serine 232 is modified to Phosphoserine. Tyrosine 399 is subject to Phosphotyrosine. 11 positions are modified to phosphoserine: serine 568, serine 573, serine 575, serine 579, serine 598, serine 619, serine 676, serine 684, serine 687, glutamine 709, and serine 834. An SH3 domain is found at 581-651; sequence KRSLYVRALF…PSKRRVEKKE (71 aa). The disordered stretch occupies residues 662 to 693; that stretch reads SKTRDKGEIPDDMGSKGLKHVTSNASDSESSY. Residues 682–693 show a composition bias toward polar residues; it reads VTSNASDSESSY. Positions 714-889 constitute a Guanylate kinase-like domain; sequence TRPVIILGPM…IYNQVKQIIE (176 aa).

Belongs to the MAGUK family. In terms of assembly, homotetramer. Interacts (via guanylate kinase-like domain) with DLGAP1, DLGAP2, DLGAP3, DLGAP4 and MAP1A. Interacts (via guanylate kinase-like domain) with KIF13B. May interact with HTR2A. Interacts (via PDZ domains) with GRIA1. Interacts (via PDZ domains) with GRIN2A. Interacts (via PDZ domains) with KCND2 and KCND3. Interacts (via PDZ domains) with KCNA1, KCNA2, KCNA3 and KCNA4. Interacts (via PDZ domains) with ADGRA3. Interacts with KCNF1. Interacts with CAMK2. Interacts with cytoskeleton-associated protein EPB41. Interacts with cytoskeleton-associated protein EZR. Found in a complex with KCNA5 and CAV3. Found in a complex with APC and CTNNB1. Interacts (via PDZ domains) with APC. Interacts with CDH1 through binding to PIK3R1. Forms multiprotein complexes with CASK, LIN7A, LIN7B, LIN7C, APBA1, and KCNJ12. Interacts with TOPK. Forms a tripartite complex composed of DLG1, MPP7 and LIN7 (LIN7A or LIN7C). May interact with TJAP1. Interacts with PTEN. Interacts with FRMPD4 (via C-terminus). Interacts with LRFN1, LRFN2 and LRFN4. Interacts with SFPQ. Interacts (via PDZ domains) with ADGRA2 (via PDZ-binding motif). Interacts with ADAM10; this interaction recruits ADAM10 to the cell membrane during long-term depression in hippocampal neurons. Interacts with DGKI (via PDZ-binding motif). Interacts (via PDZ domains) with MARCHF2 (via PDZ domain); the interaction leads to DLG1 ubiqtuitination and degradation. Interacts (via N-terminus) with MPP3; this interaction connects CADM1 with DLG1 and links CADM1 with the regulatory subunit of phosphoinositide-3-kinase (PI3K) by forming a multiprotein complex and participates in cell spreading. (Microbial infection) Interacts with HTLV-1 protein Tax. As to quaternary structure, (Microbial infection) Interacts (via PDZ domains 1 and 2) with influenza A virus protein NS1; the interaction results in the translocation of DLG1 from the cell membrane to perinuclear puncta. Acts as a scaffold protein to facilitate the interaction between LIN7C and influenza A virus protein NS1; the interaction facilitates translocation of LIN7C to cytoplasmic puncta. In terms of assembly, (Microbial infection) Interacts with human papillomavirus 18/HPV-18 protein E6. Post-translationally, phosphorylated by MAPK12. Phosphorylation of Ser-232 regulates association with GRIN2A. Ubiquitinated; by MARCHF2 which results in its degradation. In terms of tissue distribution, abundantly expressed in atrial myocardium (at protein level). Expressed in lung fibroblasts, cervical epithelial and B-cells (at protein level). Expressed in the brain (at protein level). Widely expressed, with isoforms displaying different expression profiles.

The protein localises to the cell membrane. It localises to the basolateral cell membrane. Its subcellular location is the endoplasmic reticulum membrane. The protein resides in the postsynaptic density. It is found in the synapse. The protein localises to the sarcolemma. It localises to the apical cell membrane. Its subcellular location is the cell junction. The protein resides in the cytoplasm. Its function is as follows. Essential multidomain scaffolding protein required for normal development. Recruits channels, receptors and signaling molecules to discrete plasma membrane domains in polarized cells. Promotes epithelial cell layer barrier function via maintaining cell-cell adhesion. May also play a role in adherens junction assembly, signal transduction, cell proliferation, synaptogenesis and lymphocyte activation. Regulates the excitability of cardiac myocytes by modulating the functional expression of Kv4 channels. Functional regulator of Kv1.5 channel. During long-term depression in hippocampal neurons, it recruits ADAM10 to the plasma membrane. In Homo sapiens (Human), this protein is Disks large homolog 1.